The primary structure comprises 420 residues: Protein MucB (420 aa).

Residues Phe-2–Gly-187 enclose the UmuC domain.

Belongs to the DNA polymerase type-Y family.

Its function is as follows. Involved in UV protection and mutation. The sequence is that of Protein MucB (mucB) from Escherichia coli.